Reading from the N-terminus, the 223-residue chain is Probable Ras-related protein Rab-4A (223 aa).

16-23 provides a ligand contact to GTP; sequence GNAGTGKT. An Effector region motif is present at residues 38–46; the sequence is TQHTIGAEF. Residues 64 to 68 and 122 to 125 contribute to the GTP site; these read DTAGQ and NKKD. S-geranylgeranyl cysteine attachment occurs at residues Cys-221 and Cys-223. The residue at position 223 (Cys-223) is a Cysteine methyl ester.

This sequence belongs to the small GTPase superfamily. Rab family.

It is found in the cell membrane. Its function is as follows. Protein transport. Probably involved in vesicular traffic. This chain is Probable Ras-related protein Rab-4A, found in Echinococcus multilocularis (Fox tapeworm).